The sequence spans 272 residues: Cytochrome b-c1 complex subunit Rieske-2, mitochondrial (272 aa).

The transit peptide at 1–60 directs the protein to the mitochondrion; sequence MLRIAGRRASSLSRWPVRSVAPSSSAFISANHFSSDDDSSSPRSISPSLASVFLHHTRGF. Over 61–109 the chain is Mitochondrial matrix; that stretch reads SSNSVSHAHDMGLVPDLPPTVAAIKNPTSKIVYDEHNHERYPPGDPSKR. The helical transmembrane segment at 110 to 132 threads the bilayer; the sequence is AFAYFVLTGGRFVYASLVRLLIL. Topologically, residues 133-272 are mitochondrial intermembrane; sequence KFVLSMSASK…FLEENKLLIG (140 aa). A Rieske domain is found at 182-270; the sequence is INLANSVDLG…YSFLEENKLL (89 aa). [2Fe-2S] cluster-binding residues include Cys215, His217, Cys234, and His237. Cys220 and Cys236 are joined by a disulfide.

Belongs to the Rieske iron-sulfur protein family. As to quaternary structure, component of the ubiquinol-cytochrome c oxidoreductase (cytochrome b-c1 complex, complex III, CIII), a multisubunit enzyme composed of 3 respiratory subunits cytochrome b, cytochrome c1 and Rieske protein, 2 core protein subunits, and several low-molecular weight protein subunits. The complex exists as an obligatory dimer and forms supercomplexes (SCs) in the inner mitochondrial membrane with cytochrome c oxidase (complex IV, CIV). [2Fe-2S] cluster serves as cofactor. As to expression, high levels are seen in the flowers while a low level expression is seen in the roots, leaves and stems.

Its subcellular location is the mitochondrion inner membrane. It carries out the reaction a quinol + 2 Fe(III)-[cytochrome c](out) = a quinone + 2 Fe(II)-[cytochrome c](out) + 2 H(+)(out). Functionally, component of the ubiquinol-cytochrome c oxidoreductase, a multisubunit transmembrane complex that is part of the mitochondrial electron transport chain which drives oxidative phosphorylation. The respiratory chain contains 3 multisubunit complexes succinate dehydrogenase (complex II, CII), ubiquinol-cytochrome c oxidoreductase (cytochrome b-c1 complex, complex III, CIII) and cytochrome c oxidase (complex IV, CIV), that cooperate to transfer electrons derived from NADH and succinate to molecular oxygen, creating an electrochemical gradient over the inner membrane that drives transmembrane transport and the ATP synthase. The cytochrome b-c1 complex catalyzes electron transfer from ubiquinol to cytochrome c, linking this redox reaction to translocation of protons across the mitochondrial inner membrane, with protons being carried across the membrane as hydrogens on the quinol. In the process called Q cycle, 2 protons are consumed from the matrix, 4 protons are released into the intermembrane space and 2 electrons are passed to cytochrome c. The Rieske protein is a catalytic core subunit containing a [2Fe-2S] iron-sulfur cluster. It cycles between 2 conformational states during catalysis to transfer electrons from the quinol bound in the Q(0) site in cytochrome b to cytochrome c1. This chain is Cytochrome b-c1 complex subunit Rieske-2, mitochondrial, found in Nicotiana tabacum (Common tobacco).